A 386-amino-acid polypeptide reads, in one-letter code: Flap endonuclease 1 (386 aa).

Residues 1–104 are N-domain; sequence MGILGLSKLI…GELAKRAERR (104 aa). Position 34 (Asp-34) interacts with Mg(2+). Positions 47 and 70 each coordinate DNA. Mg(2+)-binding residues include Asp-86, Glu-158, Glu-160, Asp-179, and Asp-181. The tract at residues 122–253 is I-domain; that stretch reads EIEKFNRRLV…KRAIELINNY (132 aa). Residue Glu-158 participates in DNA binding. Positions 231 and 233 each coordinate DNA. A Mg(2+)-binding site is contributed by Asp-233. An interaction with PCNA region spans residues 336–344; sequence TQVRLDSFF. The interval 351–386 is disordered; that stretch reads PNAVHAAKRKAEEAKKSANNKKAKTSGGAARGRRPK.

It belongs to the XPG/RAD2 endonuclease family. FEN1 subfamily. Interacts with PCNA. Three molecules of FEN1 bind to one PCNA trimer with each molecule binding to one PCNA monomer. PCNA stimulates the nuclease activity without altering cleavage specificity. Mg(2+) serves as cofactor. Phosphorylated. Phosphorylation upon DNA damage induces relocalization to the nuclear plasma.

Its subcellular location is the nucleus. It localises to the nucleolus. The protein resides in the nucleoplasm. The protein localises to the mitochondrion. Functionally, structure-specific nuclease with 5'-flap endonuclease and 5'-3' exonuclease activities involved in DNA replication and repair. During DNA replication, cleaves the 5'-overhanging flap structure that is generated by displacement synthesis when DNA polymerase encounters the 5'-end of a downstream Okazaki fragment. It enters the flap from the 5'-end and then tracks to cleave the flap base, leaving a nick for ligation. Also involved in the long patch base excision repair (LP-BER) pathway, by cleaving within the apurinic/apyrimidinic (AP) site-terminated flap. Acts as a genome stabilization factor that prevents flaps from equilibrating into structures that lead to duplications and deletions. Also possesses 5'-3' exonuclease activity on nicked or gapped double-stranded DNA, and exhibits RNase H activity. Also involved in replication and repair of rDNA and in repairing mitochondrial DNA. The polypeptide is Flap endonuclease 1 (Drosophila persimilis (Fruit fly)).